A 538-amino-acid chain; its full sequence is MPQVRNPILPGFNPDPSILRVGEDYYIATSTFEWYPGVQIHHSRDLANWELVARPLNRKSQLDMRGNPDSCGIWAPCLSHDGERFWLVYTDVKRKDGSFKDTPNYIVTAEKIEGPWSDPIYINSSGFDPSLFHDDDGRKWFVNMLWDHRRRPQLFEGIVLQEFDPKAGKLVGPRKNIFTGTDLALVEGPHLYKRNGWYYLLTAEGGTGYEHACTFARSRNIWGPYEVHPQKYILTSKDHPHAALQRAGHGDIVDTPDGRTYLVHLTGRPTTQFRRCVLGRETAIQEAYWGDDDWLYVKNGPVPSLWVDLPAARDDTKYWEEKRYTFESGLHKDFQWLRTPETDRIFRTREDGKLTLIGRESIGSWFEQALVARRQTHFSCDAETVIDFSPEDQRQFAGLTAYYCRYNFFYLAVSAHSDGQRELFIMASEASWPLGELRYPVPEGVRIPNEGKVRLALTIRGRELQFYYALEGEELKKIGPVLDASIVSDECGGHQKHGSFTGAFVGVAASDLNGTAAEATFDYFIYRPVQHPSDRYEI.

Residue glutamate 367 is the Proton donor of the active site.

This sequence belongs to the glycosyl hydrolase 43 family.

It carries out the reaction Hydrolysis of (1-&gt;4)-beta-D-xylans, to remove successive D-xylose residues from the non-reducing termini.. It catalyses the reaction Hydrolysis of terminal non-reducing alpha-L-arabinofuranoside residues in alpha-L-arabinosides.. Its activity is regulated as follows. Activity is inhibited by Ag(+), Li(+), Cu(2+), Cr(3+), Co(3+), Ni(2+), Mg(2+), Zn(2+), EDTA, SDS and beta-mercaptoethanol; but not by Mn(2+), Pb(2+), Ca(2+) and Fe(3+). Functionally, bifunctional beta-xylosidase/alpha-L-arabinosidases with a low level of xylanase activity. Is most active on 4-nitrophenyl beta-D-xylopyranoside (pNPX) (defined as 100%), moderate on p-nitrophenyl-alpha-L-arabinofuranoside (pNPA) (56.6%), and weak on beechwood xylan (5.7%) and birchwood xylan (2.7%). Is able to attack xylooligosacchardies with degrees of polymerisation of 2-5, releasing the amounts of reducing sugars in the order of xylopentose &gt; xylotetraose &gt; xylotriose &gt; xylobiose, i.e. the rate of xylose released from xylooligosacchardies increased with the chain length. No activity was detected in the presence of carboxymethyl cellulose-sodium (CMC-Na), sugar beet arabinan, AZCL-arabinan (debranched), 4-nitrophenyl a-D - galactopyranoside, 2-nitrophenyl beta-D-galactopyranoside, and 4-nitrophenyl alpha-D-glucopyranoside. This chain is Xylosidase/arabinosidase 43B, found in Humicola insolens (Soft-rot fungus).